The chain runs to 322 residues: Probable cardiolipin synthase (CMP-forming) (322 aa).

3 helical membrane-spanning segments follow: residues 143 to 163, 199 to 219, and 289 to 309; these read IGYV…AFAG, LVIS…IVVF, and LQGL…SYVM.

It belongs to the CDP-alcohol phosphatidyltransferase class-I family.

Its subcellular location is the mitochondrion inner membrane. It carries out the reaction a CDP-1,2-diacyl-sn-glycerol + a 1,2-diacyl-sn-glycero-3-phospho-(1'-sn-glycerol) = a cardiolipin + CMP + H(+). In terms of biological role, catalyzes the synthesis of cardiolipin (CL) (diphosphatidylglycerol) by specifically transferring a phosphatidyl group from CDP-diacylglycerol to phosphatidylglycerol (PG). CL is a key phospholipid in mitochondrial membranes and plays important roles in maintaining the functional integrity and dynamics of mitochondria under both optimal and stress conditions. The sequence is that of Probable cardiolipin synthase (CMP-forming) (CLS) from Drosophila melanogaster (Fruit fly).